A 138-amino-acid chain; its full sequence is Large ribosomal subunit protein uL16 (138 aa).

Positions 1-16 are enriched in basic residues; sequence MLIPRKVAHRKQHHPG. A disordered region spans residues 1–24; that stretch reads MLIPRKVAHRKQHHPGRTGAAKGG.

The protein belongs to the universal ribosomal protein uL16 family. As to quaternary structure, part of the 50S ribosomal subunit.

In terms of biological role, binds 23S rRNA and is also seen to make contacts with the A and possibly P site tRNAs. The polypeptide is Large ribosomal subunit protein uL16 (Frankia alni (strain DSM 45986 / CECT 9034 / ACN14a)).